Reading from the N-terminus, the 306-residue chain is Probable GTP 3',8-cyclase (306 aa).

Residues 5–232 (RFGRPVTNLR…RRRKYFLPVD (228 aa)) enclose the Radical SAM core domain. Arg-14 is a binding site for GTP. Positions 21 and 25 each coordinate [4Fe-4S] cluster. Tyr-27 contributes to the S-adenosyl-L-methionine binding site. Residue Cys-28 coordinates [4Fe-4S] cluster. Lys-61 is a binding site for GTP. Residue Gly-65 participates in S-adenosyl-L-methionine binding. Thr-90 contributes to the GTP binding site. Ser-114 is an S-adenosyl-L-methionine binding site. Lys-150 lines the GTP pocket. Met-189 is an S-adenosyl-L-methionine binding site. Residues Cys-250 and Cys-253 each coordinate [4Fe-4S] cluster. 255–257 (RLR) provides a ligand contact to GTP. [4Fe-4S] cluster is bound at residue Cys-267.

The protein belongs to the radical SAM superfamily. MoaA family. [4Fe-4S] cluster serves as cofactor.

The catalysed reaction is GTP + AH2 + S-adenosyl-L-methionine = (8S)-3',8-cyclo-7,8-dihydroguanosine 5'-triphosphate + 5'-deoxyadenosine + L-methionine + A + H(+). The protein operates within cofactor biosynthesis; molybdopterin biosynthesis. Its function is as follows. Catalyzes the cyclization of GTP to (8S)-3',8-cyclo-7,8-dihydroguanosine 5'-triphosphate. The chain is Probable GTP 3',8-cyclase from Pyrococcus abyssi (strain GE5 / Orsay).